The primary structure comprises 163 residues: 3-hydroxyacyl-[acyl-carrier-protein] dehydratase FabZ (163 aa).

His-58 is a catalytic residue.

It belongs to the thioester dehydratase family. FabZ subfamily.

The protein resides in the cytoplasm. It catalyses the reaction a (3R)-hydroxyacyl-[ACP] = a (2E)-enoyl-[ACP] + H2O. Its function is as follows. Involved in unsaturated fatty acids biosynthesis. Catalyzes the dehydration of short chain beta-hydroxyacyl-ACPs and long chain saturated and unsaturated beta-hydroxyacyl-ACPs. This chain is 3-hydroxyacyl-[acyl-carrier-protein] dehydratase FabZ, found in Francisella tularensis subsp. tularensis (strain FSC 198).